Here is a 244-residue protein sequence, read N- to C-terminus: Carbonic anhydrase (244 aa).

The N-terminal stretch at 1 to 19 is a signal peptide; it reads MKGKLSIALMLSVCFSASA. Residues 23–244 form the Alpha-carbonic anhydrase domain; it reads VHWGYEGNGD…QPLNGRIIIH (222 aa). An intrachain disulfide couples Cys-46 to Cys-199. His-84 (proton acceptor) is an active-site residue. Zn(2+) is bound by residues His-109, His-111, and His-128. Residue 195 to 196 coordinates substrate; the sequence is TT.

The protein belongs to the alpha-carbonic anhydrase family. It depends on Zn(2+) as a cofactor.

The protein localises to the periplasm. It catalyses the reaction hydrogencarbonate + H(+) = CO2 + H2O. Its function is as follows. Reversible hydration of carbon dioxide. The sequence is that of Carbonic anhydrase (cah) from Pectobacterium carotovorum (Erwinia carotovora).